A 517-amino-acid polypeptide reads, in one-letter code: Crotonobetaine/carnitine--CoA ligase (517 aa).

It belongs to the ATP-dependent AMP-binding enzyme family.

It carries out the reaction 4-(trimethylamino)butanoate + ATP + CoA = 4-(trimethylamino)butanoyl-CoA + AMP + diphosphate. The catalysed reaction is crotonobetaine + ATP + CoA = crotonobetainyl-CoA + AMP + diphosphate. It catalyses the reaction (R)-carnitine + ATP + CoA = (R)-carnitinyl-CoA + AMP + diphosphate. It functions in the pathway amine and polyamine metabolism; carnitine metabolism. Its function is as follows. Catalyzes the transfer of CoA to carnitine, generating the initial carnitinyl-CoA needed for the CaiB reaction cycle. Also has activity toward crotonobetaine and gamma-butyrobetaine. In Salmonella enteritidis PT4 (strain P125109), this protein is Crotonobetaine/carnitine--CoA ligase.